Here is a 541-residue protein sequence, read N- to C-terminus: Paromamine 6'-oxidase (541 aa).

Residues M1–W29 are disordered. H470 acts as the Proton acceptor in catalysis.

The protein belongs to the GMC oxidoreductase family. The cofactor is FAD.

It catalyses the reaction 6'''-deamino-6'''-hydroxyneomycin C + O2 = 6'''-deamino-6'''-oxoneomycin C + H2O2. The catalysed reaction is paromamine + O2 = 6'-oxoparomamine + H2O2. It functions in the pathway antibiotic biosynthesis; neomycin biosynthesis. Functionally, glucosaminyl-6'-oxidase involved in the biosynthetic pathway of neomycin by mediating FAD-dependent dehydrogenation of paromamine to 6'-dehydro-6'-oxoparomamine. Works in combination with neamine transaminase to replace the 6-hydroxy group of paromamine with an amino group. Also able to collaborate with neomycin C transaminase to replace the 6'''-hydroxy group of 6'''-hydroxyneomycin C with an amino group. The protein is Paromamine 6'-oxidase (neoG) of Streptomyces fradiae (Streptomyces roseoflavus).